The following is a 165-amino-acid chain: Lipoprotein signal peptidase (165 aa).

Helical transmembrane passes span Leu64–Met84 and Gly88–Val108. Active-site residues include Asp118 and Asp136. The chain crosses the membrane as a helical span at residues Ser128–Val148.

The protein belongs to the peptidase A8 family.

Its subcellular location is the cell inner membrane. It catalyses the reaction Release of signal peptides from bacterial membrane prolipoproteins. Hydrolyzes -Xaa-Yaa-Zaa-|-(S,diacylglyceryl)Cys-, in which Xaa is hydrophobic (preferably Leu), and Yaa (Ala or Ser) and Zaa (Gly or Ala) have small, neutral side chains.. It participates in protein modification; lipoprotein biosynthesis (signal peptide cleavage). Its function is as follows. This protein specifically catalyzes the removal of signal peptides from prolipoproteins. The chain is Lipoprotein signal peptidase from Methylobacterium sp. (strain 4-46).